A 309-amino-acid polypeptide reads, in one-letter code: Olfactory receptor 1A2 (309 aa).

Over 1–25 (MKKENQSFNLDFILLGVTSQQEQNN) the chain is Extracellular. A glycan (N-linked (GlcNAc...) asparagine) is linked at N5. A helical transmembrane segment spans residues 26 to 49 (VFFVIFLCIYPITLTGNLLIILAI). Residues 50 to 57 (CADIRLHN) lie on the Cytoplasmic side of the membrane. Residues 58–79 (PMYFLLANLSLVDIIFSSVTIP) form a helical membrane-spanning segment. The Extracellular portion of the chain corresponds to 80–100 (KVLANHLLGSKFISFGGCLMQ). C97 and C189 are oxidised to a cystine. A helical transmembrane segment spans residues 101-120 (MYFMIALAKADSYTLAAMAY). The Cytoplasmic segment spans residues 121–139 (DRAVAISCPLHYTTIMSPR). The helical transmembrane segment at 140-158 (SCILLIAGSWVIGNTSALP) threads the bilayer. Topologically, residues 159–195 (HTLLTASLSFCGNQEVANFYCDIMPLLKLSCSDVHFN) are extracellular. The chain crosses the membrane as a helical span at residues 196–218 (VKMMYLGVGVFSLPLLCIIVSYV). The Cytoplasmic portion of the chain corresponds to 219–235 (QVFSTVFQVPSTKSLFK). The helical transmembrane segment at 236–258 (AFCTCGSHLTVVFLYYGTTMGMY) threads the bilayer. Residues 259–270 (FRPLTSYSPKDA) are Extracellular-facing. The chain crosses the membrane as a helical span at residues 271-290 (VITVMYVAVTPALNPFIYSL). Residues 291-309 (RNWDMKAALQKLFSKRISS) lie on the Cytoplasmic side of the membrane.

Belongs to the G-protein coupled receptor 1 family.

It localises to the cell membrane. In terms of biological role, odorant receptor. This is Olfactory receptor 1A2 (OR1A2) from Homo sapiens (Human).